Reading from the N-terminus, the 390-residue chain is Queuine tRNA-ribosyltransferase (390 aa).

Catalysis depends on aspartate 92, which acts as the Proton acceptor. Substrate contacts are provided by residues 92–96, aspartate 146, glutamine 195, and glycine 222; that span reads DSGGF. The interval 253–259 is RNA binding; it reads GVGTPED. The active-site Nucleophile is the aspartate 272. The interval 277-281 is RNA binding; important for wobble base 34 recognition; it reads TRNAR. Cysteine 310, cysteine 312, cysteine 315, and histidine 354 together coordinate Zn(2+).

Belongs to the queuine tRNA-ribosyltransferase family. In terms of assembly, homodimer. Within each dimer, one monomer is responsible for RNA recognition and catalysis, while the other monomer binds to the replacement base PreQ1. It depends on Zn(2+) as a cofactor.

It carries out the reaction 7-aminomethyl-7-carbaguanine + guanosine(34) in tRNA = 7-aminomethyl-7-carbaguanosine(34) in tRNA + guanine. Its pathway is tRNA modification; tRNA-queuosine biosynthesis. In terms of biological role, catalyzes the base-exchange of a guanine (G) residue with the queuine precursor 7-aminomethyl-7-deazaguanine (PreQ1) at position 34 (anticodon wobble position) in tRNAs with GU(N) anticodons (tRNA-Asp, -Asn, -His and -Tyr). Catalysis occurs through a double-displacement mechanism. The nucleophile active site attacks the C1' of nucleotide 34 to detach the guanine base from the RNA, forming a covalent enzyme-RNA intermediate. The proton acceptor active site deprotonates the incoming PreQ1, allowing a nucleophilic attack on the C1' of the ribose to form the product. After dissociation, two additional enzymatic reactions on the tRNA convert PreQ1 to queuine (Q), resulting in the hypermodified nucleoside queuosine (7-(((4,5-cis-dihydroxy-2-cyclopenten-1-yl)amino)methyl)-7-deazaguanosine). This is Queuine tRNA-ribosyltransferase from Acidovorax ebreus (strain TPSY) (Diaphorobacter sp. (strain TPSY)).